The following is a 480-amino-acid chain: tRNA (uracil-5-)-methyltransferase homolog B (480 aa).

3 residues coordinate S-adenosyl-L-methionine: Gln-299, Glu-349, and Asn-399. The Nucleophile role is filled by Cys-427. The Proton acceptor role is filled by Glu-473.

It belongs to the class I-like SAM-binding methyltransferase superfamily. RNA M5U methyltransferase family.

Its subcellular location is the mitochondrion. The catalysed reaction is uridine(54) in tRNA + S-adenosyl-L-methionine = 5-methyluridine(54) in tRNA + S-adenosyl-L-homocysteine + H(+). It carries out the reaction a uridine in 12S rRNA + S-adenosyl-L-methionine = a 5-methyluridine in 12S rRNA + S-adenosyl-L-homocysteine + H(+). Mitochondrial S-adenosyl-L-methionine-dependent methyltransferase that catalyzes the formation of 5-methyl-uridine in tRNAs and 12S rRNA. Catalyzes the methylation of uridine at position 54 (m5U54) in all tRNAs. Specifically methylates the uridine in position 429 of 12S rRNA (m5U429). Does not affect RNA stability or mitochondrial translation. The chain is tRNA (uracil-5-)-methyltransferase homolog B (trmt2b) from Danio rerio (Zebrafish).